The primary structure comprises 313 residues: tRNA-cytidine(32) 2-sulfurtransferase (313 aa).

Positions 46–51 (SGGKDS) match the PP-loop motif motif. Positions 121, 124, and 212 each coordinate [4Fe-4S] cluster.

It belongs to the TtcA family. Homodimer. Mg(2+) serves as cofactor. It depends on [4Fe-4S] cluster as a cofactor.

It localises to the cytoplasm. It carries out the reaction cytidine(32) in tRNA + S-sulfanyl-L-cysteinyl-[cysteine desulfurase] + AH2 + ATP = 2-thiocytidine(32) in tRNA + L-cysteinyl-[cysteine desulfurase] + A + AMP + diphosphate + H(+). It participates in tRNA modification. Its function is as follows. Catalyzes the ATP-dependent 2-thiolation of cytidine in position 32 of tRNA, to form 2-thiocytidine (s(2)C32). The sulfur atoms are provided by the cysteine/cysteine desulfurase (IscS) system. The sequence is that of tRNA-cytidine(32) 2-sulfurtransferase from Nitrosomonas eutropha (strain DSM 101675 / C91 / Nm57).